We begin with the raw amino-acid sequence, 402 residues long: MSGEVECRVCHAKVQVPMAAAAVSKAYDIHRSSVSSRQRALNVLLVSGDCVLAGLQPILVYMCKVDGKFKFSPVSVNFLTEITKIIFAIIMLCIQARRLKVGEKPFLTVSTFMQAARNNVLLAVPALFYAINNYMKFVMQLYFNPATVKMLGNLKVLVIAVLLKVIMRRRFSTIQWEALALLLIGISVNQLKSLPEGSSTLGLPVAAGAYLYTLFFVTVPALASVYNEKALKSQFDTSIYLQNLFLYGYGAIFNFLGLVITAIIQGPSSFNILEGHSKATMFLICNNAAQGILSSFFFKYADTILKKYSSTIATIFTGVASAVLFGHTLTINFVLAISIVIISMHQYLSNQIKDEVPSSKIEMGDAHEHRSKESVVVNVSDSIATEAKHRHGTDERQPLLPV.

Residues methionine 1–asparagine 42 lie on the Cytoplasmic side of the membrane. The chain crosses the membrane as a helical span at residues valine 43–cysteine 63. The Lumenal portion of the chain corresponds to lysine 64–proline 73. A helical transmembrane segment spans residues valine 74 to isoleucine 94. Residues glutamine 95–asparagine 118 are Cytoplasmic-facing. Residues asparagine 119 to methionine 139 form a helical membrane-spanning segment. The Lumenal portion of the chain corresponds to glutamine 140–alanine 146. Residues threonine 147–methionine 167 form a helical membrane-spanning segment. Over arginine 168–arginine 170 the chain is Cytoplasmic. The helical transmembrane segment at phenylalanine 171–leucine 191 threads the bilayer. Over lysine 192 to glycine 202 the chain is Lumenal. The helical transmembrane segment at leucine 203–alanine 223 threads the bilayer. Residues serine 224 to asparagine 243 are Cytoplasmic-facing. A helical transmembrane segment spans residues leucine 244–isoleucine 264. The Lumenal segment spans residues glutamine 265 to threonine 280. Residues methionine 281 to alanine 301 traverse the membrane as a helical segment. Residues aspartate 302–serine 321 are Cytoplasmic-facing. The chain crosses the membrane as a helical span at residues alanine 322–isoleucine 342. Over serine 343–valine 402 the chain is Lumenal.

Belongs to the nucleotide-sugar transporter family. CMP-Sialate:CMP antiporter (TC 2.A.7.12) subfamily.

It is found in the golgi apparatus membrane. In terms of biological role, sugar transporter involved in the transport of CMP-sialic acid from the cytoplasm into the Golgi. May transport important nucleotide sugars such as CMP-Kdo (2-keto-3-deoxy-D-manno-octulosonic acid) in physiological conditions. This chain is CMP-sialic acid transporter 3, found in Oryza sativa subsp. indica (Rice).